Here is a 122-residue protein sequence, read N- to C-terminus: Phospholipase A2 crotoxin basic subunit CBd (122 aa).

Cystine bridges form between cysteine 26/cysteine 115, cysteine 28/cysteine 44, cysteine 43/cysteine 95, cysteine 49/cysteine 122, cysteine 50/cysteine 88, cysteine 57/cysteine 81, and cysteine 75/cysteine 86. Ca(2+) is bound by residues tyrosine 27, glycine 29, and glycine 31. The active site involves histidine 47. Aspartate 48 lines the Ca(2+) pocket. Residue aspartate 89 is part of the active site.

Belongs to the phospholipase A2 family. Group II subfamily. D49 sub-subfamily. As to quaternary structure, heterodimer of one of the acidic (CA1, CA2, CA3 or CA4) and one of the basic (CBa1, CBa2, CBb, CBc or CBd) subunits; non-covalently linked. The acidic subunit is non-toxic, without enzymatic activity and comprises 3 peptides that are cross-linked by 5 disulfide bridges. The basic subunit is toxic, has phospholipase A2 activity and is composed of a single chain. Multiple variants of each subunit give different crotoxin complexes that can be subdivided into 2 classes: (1) those of high toxicity, low PLA2 activity (CBb, CBc and CBd linked with high affinity to any CA) and high stability (K(d)=4.5 nM) and (2) those of moderate toxicity, high PLA2 activity (CBa2 linked with low affinity to any CA) and low stability (K(d)=25 nM). Interacts with crotoxin inhibitor from Crotalus serum (CICS); the interaction leads to dissociation of the CA-CB heterodimer and to inhibition of PLA2 activity of the CB subunit. Interacts with human NBD1 domain of CFTR. It depends on Ca(2+) as a cofactor. As to expression, expressed by the venom gland.

It localises to the secreted. The catalysed reaction is a 1,2-diacyl-sn-glycero-3-phosphocholine + H2O = a 1-acyl-sn-glycero-3-phosphocholine + a fatty acid + H(+). In terms of biological role, heterodimer CA-CB: Crotoxin is a potent presynaptic neurotoxin that possesses phospholipase A2 (PLA2) activity and exerts a lethal action by blocking neuromuscular transmission. It consists of a non-covalent association of a basic and weakly toxic PLA2 subunit (CBa2, CBb, CBc, or CBd), with a small acidic, non-enzymatic and non-toxic subunit (CA1, CA2, CA3 or CA4). The complex acts by binding to a specific 48-kDa protein (R48) receptor located on presynaptic membranes, forming a transient ternary complex CA-CB-R48, followed by dissociation of the CA-CB complex and release of the CA subunit. At equilibrium, only the CB subunits remain associated with the specific crotoxin receptor. In addition to neurotoxicity, crotoxin has been found to exert myotoxicity, nephrotoxicity, and cardiovascular toxicity. Moreover, anti-inflammatory, immunomodulatory, anti-tumor and analgesic effects of crotoxin have also been reported. Monomer CBd: The basic subunit of crotoxin is a snake venom phospholipase A2 (PLA2) that exhibits weak neurotoxicity (10-fold less than the heterodimer) and very strong anticoagulant effects by binding to factor Xa (F10) and inhibiting the prothrombinase activity. In addition, it shows the same effects described for the heterodimer and binds the nucleotide-binding domain (NBD1) of CFTR chloride channels and increases the channel current. PLA2 catalyzes the calcium-dependent hydrolysis of the 2-acyl groups in 3-sn-phosphoglycerides. The chain is Phospholipase A2 crotoxin basic subunit CBd from Crotalus durissus terrificus (South American rattlesnake).